A 328-amino-acid polypeptide reads, in one-letter code: DNA-directed RNA polymerase subunit alpha (328 aa).

An alpha N-terminal domain (alpha-NTD) region spans residues 1-232; it reads MSTQGFLKPR…DQISVFAALE (232 aa). Residues 248-328 are alpha C-terminal domain (alpha-CTD); that stretch reads IDPVLLRPVD…NWPPLGLERP (81 aa).

This sequence belongs to the RNA polymerase alpha chain family. As to quaternary structure, homodimer. The RNAP catalytic core consists of 2 alpha, 1 beta, 1 beta' and 1 omega subunit. When a sigma factor is associated with the core the holoenzyme is formed, which can initiate transcription.

The enzyme catalyses RNA(n) + a ribonucleoside 5'-triphosphate = RNA(n+1) + diphosphate. Functionally, DNA-dependent RNA polymerase catalyzes the transcription of DNA into RNA using the four ribonucleoside triphosphates as substrates. This chain is DNA-directed RNA polymerase subunit alpha, found in Bordetella avium (strain 197N).